Consider the following 560-residue polypeptide: DNA ligase B (560 aa).

K124 (N6-AMP-lysine intermediate) is an active-site residue.

Belongs to the NAD-dependent DNA ligase family. LigB subfamily.

The enzyme catalyses NAD(+) + (deoxyribonucleotide)n-3'-hydroxyl + 5'-phospho-(deoxyribonucleotide)m = (deoxyribonucleotide)n+m + AMP + beta-nicotinamide D-nucleotide.. In terms of biological role, catalyzes the formation of phosphodiester linkages between 5'-phosphoryl and 3'-hydroxyl groups in double-stranded DNA using NAD as a coenzyme and as the energy source for the reaction. The polypeptide is DNA ligase B (Escherichia coli (strain K12 / DH10B)).